The primary structure comprises 60 residues: MFLGMPTLTHEEQQKAVEKIQHLMSEGMSSGEAIQLVAQELREKHTTRESVSIVFDDDND.

This sequence belongs to the UPF0181 family.

The sequence is that of UPF0181 protein PMI1604 from Proteus mirabilis (strain HI4320).